Here is a 562-residue protein sequence, read N- to C-terminus: Dihydroxy-acid dehydratase (562 aa).

Position 51 (cysteine 51) interacts with [2Fe-2S] cluster. Residue aspartate 83 participates in Mg(2+) binding. Cysteine 124 is a [2Fe-2S] cluster binding site. Aspartate 125 and lysine 126 together coordinate Mg(2+). The residue at position 126 (lysine 126) is an N6-carboxylysine. A [2Fe-2S] cluster-binding site is contributed by cysteine 196. Residue glutamate 448 coordinates Mg(2+). The Proton acceptor role is filled by serine 474.

The protein belongs to the IlvD/Edd family. As to quaternary structure, homodimer. [2Fe-2S] cluster serves as cofactor. The cofactor is Mg(2+).

The catalysed reaction is (2R)-2,3-dihydroxy-3-methylbutanoate = 3-methyl-2-oxobutanoate + H2O. The enzyme catalyses (2R,3R)-2,3-dihydroxy-3-methylpentanoate = (S)-3-methyl-2-oxopentanoate + H2O. It participates in amino-acid biosynthesis; L-isoleucine biosynthesis; L-isoleucine from 2-oxobutanoate: step 3/4. It functions in the pathway amino-acid biosynthesis; L-valine biosynthesis; L-valine from pyruvate: step 3/4. In terms of biological role, functions in the biosynthesis of branched-chain amino acids. Catalyzes the dehydration of (2R,3R)-2,3-dihydroxy-3-methylpentanoate (2,3-dihydroxy-3-methylvalerate) into 2-oxo-3-methylpentanoate (2-oxo-3-methylvalerate) and of (2R)-2,3-dihydroxy-3-methylbutanoate (2,3-dihydroxyisovalerate) into 2-oxo-3-methylbutanoate (2-oxoisovalerate), the penultimate precursor to L-isoleucine and L-valine, respectively. This is Dihydroxy-acid dehydratase from Pyrobaculum aerophilum (strain ATCC 51768 / DSM 7523 / JCM 9630 / CIP 104966 / NBRC 100827 / IM2).